A 135-amino-acid polypeptide reads, in one-letter code: Phosphoinositide-interacting protein (135 aa).

The disordered stretch occupies residues 1 to 21 (MEVLPKALEVDERSPESKDLL). The span at 8–19 (LEVDERSPESKD) shows a compositional bias: basic and acidic residues. Transmembrane regions (helical) follow at residues 54-74 (IIIMSVGAAILLFGVAITCVA) and 92-112 (PAFLSLGLMMLVCGLVWVPII).

As to quaternary structure, interacts with TRPV1. Strongly expressed in most dorsal root ganglia (DRG) and trigeminal neurons. Expressed by most peptidergic (CGRP+) and non-peptidergic (IB4+) DRG neurons. Weakly expressed in other parts of the peripheral nervous system (PNS) including sympathetic and enteric neurons. Not expressed in the spinal cord.

The protein resides in the membrane. Its function is as follows. Regulatory subunit of TRPV1, a molecular sensor of noxious heat and capsaicin. Positively regulates TRPV1 channel activity via phosphatidylinositol 4,5-bisphosphate (PIP2). Binds various phosphoinositide, including phosphatidylinositol 4,5-bisphosphate (PIP2), but not phosphatidylinositol (PI). The protein is Phosphoinositide-interacting protein (Pirt) of Mus musculus (Mouse).